The primary structure comprises 193 residues: Probable GTP-binding protein EngB (193 aa).

The EngB-type G domain maps to 22–193 (ALPEFALAGR…EAWAALERFL (172 aa)). GTP-binding positions include 30–37 (GRSNVGKS), 57–61 (GKTQT), 75–78 (DVPG), 142–145 (TKAD), and 174–176 (FSA). Residues serine 37 and threonine 59 each contribute to the Mg(2+) site.

It belongs to the TRAFAC class TrmE-Era-EngA-EngB-Septin-like GTPase superfamily. EngB GTPase family. Mg(2+) is required as a cofactor.

In terms of biological role, necessary for normal cell division and for the maintenance of normal septation. This is Probable GTP-binding protein EngB from Geobacillus sp. (strain WCH70).